Consider the following 390-residue polypeptide: Flap endonuclease 1 (390 aa).

The tract at residues 1 to 111 (MGIKGLAKLL…GELLKRREKR (111 aa)) is N-domain. A Mg(2+)-binding site is contributed by aspartate 34. Residues arginine 47 and arginine 77 each contribute to the DNA site. Residues aspartate 93, glutamate 165, glutamate 167, aspartate 186, and aspartate 188 each coordinate Mg(2+). The I-domain stretch occupies residues 129–260 (EQDKQSKRLV…KTALKLIREH (132 aa)). Glutamate 165 contributes to the DNA binding site. DNA contacts are provided by glycine 238 and aspartate 240. Aspartate 240 is a binding site for Mg(2+). Residues 342–390 (KPQSRMDSFFKVKANPEGDKKKAEKRKAELAASRGKGKKGKGGGGFKKK) are disordered. The tract at residues 343–351 (PQSRMDSFF) is interaction with PCNA. Positions 349–370 (SFFKVKANPEGDKKKAEKRKAE) are enriched in basic and acidic residues. Residues 376–390 (GKGKKGKGGGGFKKK) are compositionally biased toward basic residues.

The protein belongs to the XPG/RAD2 endonuclease family. FEN1 subfamily. Interacts with PCNA. Three molecules of FEN1 bind to one PCNA trimer with each molecule binding to one PCNA monomer. PCNA stimulates the nuclease activity without altering cleavage specificity. Mg(2+) serves as cofactor. Phosphorylated. Phosphorylation upon DNA damage induces relocalization to the nuclear plasma.

It localises to the nucleus. Its subcellular location is the nucleolus. It is found in the nucleoplasm. The protein localises to the mitochondrion. In terms of biological role, structure-specific nuclease with 5'-flap endonuclease and 5'-3' exonuclease activities involved in DNA replication and repair. During DNA replication, cleaves the 5'-overhanging flap structure that is generated by displacement synthesis when DNA polymerase encounters the 5'-end of a downstream Okazaki fragment. It enters the flap from the 5'-end and then tracks to cleave the flap base, leaving a nick for ligation. Also involved in the long patch base excision repair (LP-BER) pathway, by cleaving within the apurinic/apyrimidinic (AP) site-terminated flap. Acts as a genome stabilization factor that prevents flaps from equilibrating into structures that lead to duplications and deletions. Also possesses 5'-3' exonuclease activity on nicked or gapped double-stranded DNA, and exhibits RNase H activity. Also involved in replication and repair of rDNA and in repairing mitochondrial DNA. This Thalassiosira pseudonana (Marine diatom) protein is Flap endonuclease 1.